Here is a 381-residue protein sequence, read N- to C-terminus: Probable tRNA sulfurtransferase (381 aa).

In terms of domain architecture, THUMP spans 57-160 (EKGIEKLKSV…NKAYVYSKKI (104 aa)). Residues 177–178 (ML), 202–203 (YF), Arg259, Gly281, and Gln290 each bind ATP.

Belongs to the ThiI family.

The protein resides in the cytoplasm. The catalysed reaction is [ThiI sulfur-carrier protein]-S-sulfanyl-L-cysteine + a uridine in tRNA + 2 reduced [2Fe-2S]-[ferredoxin] + ATP + H(+) = [ThiI sulfur-carrier protein]-L-cysteine + a 4-thiouridine in tRNA + 2 oxidized [2Fe-2S]-[ferredoxin] + AMP + diphosphate. It catalyses the reaction [ThiS sulfur-carrier protein]-C-terminal Gly-Gly-AMP + S-sulfanyl-L-cysteinyl-[cysteine desulfurase] + AH2 = [ThiS sulfur-carrier protein]-C-terminal-Gly-aminoethanethioate + L-cysteinyl-[cysteine desulfurase] + A + AMP + 2 H(+). It participates in cofactor biosynthesis; thiamine diphosphate biosynthesis. In terms of biological role, catalyzes the ATP-dependent transfer of a sulfur to tRNA to produce 4-thiouridine in position 8 of tRNAs, which functions as a near-UV photosensor. Also catalyzes the transfer of sulfur to the sulfur carrier protein ThiS, forming ThiS-thiocarboxylate. This is a step in the synthesis of thiazole, in the thiamine biosynthesis pathway. The sulfur is donated as persulfide by IscS. In Clostridium kluyveri (strain NBRC 12016), this protein is Probable tRNA sulfurtransferase.